The sequence spans 503 residues: Cytochrome P450 3A25 (503 aa).

Position 442 (cysteine 442) interacts with heme.

It belongs to the cytochrome P450 family. It depends on heme as a cofactor.

Its subcellular location is the endoplasmic reticulum membrane. It is found in the microsome membrane. It catalyses the reaction an organic molecule + reduced [NADPH--hemoprotein reductase] + O2 = an alcohol + oxidized [NADPH--hemoprotein reductase] + H2O + H(+). Functionally, cytochromes P450 are a group of heme-thiolate monooxygenases. In liver microsomes, this enzyme is involved in an NADPH-dependent electron transport pathway. It oxidizes a variety of structurally unrelated compounds, including steroids, fatty acids, and xenobiotics. The polypeptide is Cytochrome P450 3A25 (Cyp3a25) (Mus musculus (Mouse)).